The sequence spans 164 residues: Putative 4-hydroxy-4-methyl-2-oxoglutarate aldolase (164 aa).

Substrate contacts are provided by residues 79-82 (GDRL) and Arg-101. Asp-102 is a binding site for a divalent metal cation.

It belongs to the class II aldolase/RraA-like family. In terms of assembly, homotrimer. The cofactor is a divalent metal cation.

It catalyses the reaction 4-hydroxy-4-methyl-2-oxoglutarate = 2 pyruvate. The enzyme catalyses oxaloacetate + H(+) = pyruvate + CO2. In terms of biological role, catalyzes the aldol cleavage of 4-hydroxy-4-methyl-2-oxoglutarate (HMG) into 2 molecules of pyruvate. Also contains a secondary oxaloacetate (OAA) decarboxylase activity due to the common pyruvate enolate transition state formed following C-C bond cleavage in the retro-aldol and decarboxylation reactions. This chain is Putative 4-hydroxy-4-methyl-2-oxoglutarate aldolase, found in Halorhodospira halophila (strain DSM 244 / SL1) (Ectothiorhodospira halophila (strain DSM 244 / SL1)).